The following is a 262-amino-acid chain: Probable DNA polymerase sliding clamp 1 (262 aa).

A DNA-binding region spans residues 67–86; that stretch reads KCEHTYELGVNVLNMFKLLR.

Belongs to the PCNA family.

In terms of biological role, sliding clamp subunit. Responsible for tethering the catalytic subunit of DNA polymerase to DNA during high-speed replication. This Chlorella (PBCV-1) protein is Probable DNA polymerase sliding clamp 1.